Here is a 443-residue protein sequence, read N- to C-terminus: Carboxypeptidase M (443 aa).

The first 17 residues, 1–17 (MDFPCLWLGLLLPLVAA), serve as a signal peptide directing secretion. The Peptidase M14 domain occupies 21-311 (NYHRQEGMEA…ASLIEYIKQV (291 aa)). Asn-38 carries N-linked (GlcNAc...) asparagine glycosylation. Zn(2+) is bound by residues His-83 and Glu-86. Residues Asn-115 and Asn-164 are each glycosylated (N-linked (GlcNAc...) asparagine). 3 disulfides stabilise this stretch: Cys-138-Cys-285, Cys-242-Cys-284, and Cys-341-Cys-410. Zn(2+) is bound at residue His-190. Glu-281 acts as the Proton donor/acceptor in catalysis. 2 N-linked (GlcNAc...) asparagine glycosylation sites follow: Asn-363 and Asn-384. Ser-423 carries the GPI-anchor amidated serine lipid modification. Positions 424–443 (AATKPSLFLFLVSLLHIFFK) are cleaved as a propeptide — removed in mature form.

This sequence belongs to the peptidase M14 family. Zn(2+) serves as cofactor.

Its subcellular location is the cell membrane. It catalyses the reaction Cleavage of C-terminal arginine or lysine residues from polypeptides.. With respect to regulation, inhibited by O-phenanthroline and MGTA and activated by cobalt. Its function is as follows. Specifically removes C-terminal basic residues (Arg or Lys) from peptides and proteins. It is believed to play important roles in the control of peptide hormone and growth factor activity at the cell surface, and in the membrane-localized degradation of extracellular proteins. The chain is Carboxypeptidase M (CPM) from Homo sapiens (Human).